The chain runs to 1766 residues: MGGKNKQRTKGNVRPSSSGRAAELLAKERGTVPGFIGFGTSQSDLGYVPAVQGAEEIDSLVDADFRMVLRKLSKRDIITKLKAMQEFGTMCKEREAEVVKGVLPYWPRIYCKISLDHDRRVREATQQSFEQLILKVKKHLAPYLKSIMGYWLIAQCDTYSPAASAAKEAFEKAFPSSKQPEALAFCKDEILNVLQDHLLKETPDTLSDPQTVPEEEREAKFFRILTCSLLALKKLLSMLPKKEMHSLEEKLMSLLSQNKFWKYGKHSTPQVRSAFFELASAFCQFLPELVKAEAPRVCPAVLLSIDDSDAVVCPALWEAVLHAIATIEDCWSHVNARKGVLPKLWTVLREGGRGLATVIYPNILPFISKVPPGITEPKLEYFRTFFSSIIQGLSNERALASPSESSAIITTFMECLRFAILQKIDEDEQRQIHQMLIYDQLIPLTDAVLQEPRLQNGPLFYQIAETLSSWEAKAEVSSDDNTNEVFQKLLSNFWDRLLKMCILHVDKLEADEKTLFAISDMLEVLQNPKTATKPNNRKSLKVKFSDEDESERNTENGKITEVRSNSDSEIQADLQHSSILRKEPLENLVCNLAELSIVYVNEQKSEQHLKFLSALLNFFSSNRVFQVLLEQGSNAGCPPAESQEDMKVHNENPSVQFLYMNLITWLKEDWRKDMHFLVDILYSVLNCCNSDDERKVILDDLTKMDLKWIVFLQIIQKACSSTTKLSLISEWLKGDMLGERLVMLADDLCHLGLKPIATSPESSSSEKWTVLSLVLSQHIKNESLIGETYVERIIDKLQAALSKAKDLSEAGNTEPSVSFICDVASSFFSSVKGCLLMPSSEDLLLTIFQLCAQRQDATHLTVDLLVCKLKHTWISGVNSLVRHLRSMQNQSTFLHKSALWIKNQIQSSSLDVKSLQVLISAVSDLLSTLLEADRQSGCLVGAYVEHVMPNRTEWETLRESLSAEWMHKPLLEGRLSMNCEHLGSCVKLCGTTKLPGHLCTSALLSKMVLLVLENDMVKGNEDAEILVAELLYSLQWIEELENPPYLLLEYLHMLEEMHITYEKFSALSNTTNLQQTIFDRSEEHGRLWSLTMAKVIRGENAVSREMTKLFKTSEGFLPLTEGRLHTLQCLSPFLIEEEKRELVFHCVAKLMTCTQTELSSTDGAFGCLAILNSSLNDKSFGCDHLLPGVLKIIISWKNDNEDSFLFSCNLKETSAQLLGFNIEMIRYLPLLLKYSTAPLADNEWDFIMCSMLAWLETTSENYSLYHVPLVQIFACVSCDLASALSAYFEPAAPKTTENLPVNLVSEWKEFFSEGIHNLLLPLFVKVTGETKTAAEGSFQNSVLTSLGEALTYISKDQLLNHKLPAKFVAGQKTNLPDNLQTLLNTLSPLLLFWARSVQVSVYHMLSKLMPELPKFDDEDLKSYGDEEEELALSPPAALMSVLATQELLLENILECIPVGEFAVIQPLSDEFCLVLGYLLTWKLTLTFFKAASSQLRVLYSQYLRRTKSLNKLLYHLFRLMPENPVFSGLTSEVPNKDTKTFFTEELHLDVKGTGALSSQIPHLACSVYHITLKDLPAMVRLWWNSCEKRVFNVVDKFTSKYVSSVLSSQEISSVQTSTQLFNGMTVKARSAAREVIATYSVDDIFIELIIQLPSNYPLGSITVESGKRVGVAVQQWRNWMLQLSTYLTHQNGSIMEGLSLWKNNVDKRFEGIEDCMICFSVIHGSNYSLPKKACRTCKKKFHSACLYKWFTSSNKSTCPLCRETFF.

The span at 1–11 shows a compositional bias: basic residues; the sequence is MGGKNKQRTKG. Residues 1-20 form a disordered region; it reads MGGKNKQRTKGNVRPSSSGR. HEAT repeat units lie at residues 100–138, 193–231, 292–329, 335–372, and 512–549; these read KGVLPYWPRIYCKISLDHDRRVREATQQSFEQLILKVKK, VLQDHLLKETPDTLSDPQTVPEEEREAKFFRILTCSLLA, AEAPRVCPAVLLSIDDSDAVVCPALWEAVLHAIATIED, NARKGVLPKLWTVLREGGRGLATVIYPNILPFISKVPP, and EKTLFAISDMLEVLQNPKTATKPNNRKSLKVKFSDEDE. Positions 529-567 are disordered; sequence KTATKPNNRKSLKVKFSDEDESERNTENGKITEVRSNSD. Residues 551–566 are compositionally biased toward basic and acidic residues; the sequence is ERNTENGKITEVRSNS. HEAT repeat units follow at residues 606-644, 672-710, 916-953, 1184-1227, 1314-1355, and 1406-1447; these read EQHLKFLSALLNFFSSNRVFQVLLEQGSNAGCPPAESQE, KDMHFLVDILYSVLNCCNSDDERKVILDDLTKMDLKWIV, QVLISAVSDLLSTLLEADRQSGCLVGAYVEHVMPNRTE, HLLP…MIRY, GIHN…YISK, and SKLM…TQEL. The segment at 1715–1762 adopts an RING-type zinc-finger fold; the sequence is CMICFSVIHGSNYSLPKKACRTCKKKFHSACLYKWFTSSNKSTCPLCR.

It belongs to the LTN1 family. Component of the ribosome quality control complex (RQC), composed of at least the E3 ubiquitin ligase LTN1 and NEMF associated with the 60S ribosomal subunit. The complex probably also contains TCF25 as well as VCP/p97 and its ubiquitin-binding cofactors.

It is found in the cytoplasm. It localises to the cytosol. The enzyme catalyses S-ubiquitinyl-[E2 ubiquitin-conjugating enzyme]-L-cysteine + [acceptor protein]-L-lysine = [E2 ubiquitin-conjugating enzyme]-L-cysteine + N(6)-ubiquitinyl-[acceptor protein]-L-lysine.. The protein operates within protein modification; protein ubiquitination. In terms of biological role, E3 ubiquitin-protein ligase component of the ribosome quality control complex (RQC), a ribosome-associated complex that mediates ubiquitination and extraction of incompletely synthesized nascent chains for proteasomal degradation. Within the RQC complex, LTN1 is recruited to stalled 60S ribosomal subunits by NEMF and mediates ubiquitination of stalled nascent chains. Ubiquitination leads to VCP/p97 recruitment for extraction and degradation of the incomplete translation product. The sequence is that of E3 ubiquitin-protein ligase listerin (LTN1) from Gallus gallus (Chicken).